The sequence spans 411 residues: Serine hydroxymethyltransferase (411 aa).

(6S)-5,6,7,8-tetrahydrofolate is bound by residues leucine 119 and 123-125 (GHL). An N6-(pyridoxal phosphate)lysine modification is found at lysine 228. A (6S)-5,6,7,8-tetrahydrofolate-binding site is contributed by 351–353 (SPF).

Belongs to the SHMT family. In terms of assembly, homodimer. Pyridoxal 5'-phosphate is required as a cofactor.

It localises to the cytoplasm. It catalyses the reaction (6R)-5,10-methylene-5,6,7,8-tetrahydrofolate + glycine + H2O = (6S)-5,6,7,8-tetrahydrofolate + L-serine. It functions in the pathway one-carbon metabolism; tetrahydrofolate interconversion. It participates in amino-acid biosynthesis; glycine biosynthesis; glycine from L-serine: step 1/1. Its function is as follows. Catalyzes the reversible interconversion of serine and glycine with tetrahydrofolate (THF) serving as the one-carbon carrier. This reaction serves as the major source of one-carbon groups required for the biosynthesis of purines, thymidylate, methionine, and other important biomolecules. Also exhibits THF-independent aldolase activity toward beta-hydroxyamino acids, producing glycine and aldehydes, via a retro-aldol mechanism. The chain is Serine hydroxymethyltransferase from Clostridium botulinum (strain Alaska E43 / Type E3).